Here is a 299-residue protein sequence, read N- to C-terminus: UPF0603 protein OsI_019212, chloroplastic (299 aa).

2 stretches are compositionally biased toward low complexity: residues 1 to 14 and 22 to 36; these read METLLSPSTLLSPL and ASPAASASSSSSSPA. A chloroplast-targeting transit peptide spans 1 to 41; the sequence is METLLSPSTLLSPLRGSKKKPASPAASASSSSSSPARSVVS. Disordered regions lie at residues 1-60 and 244-265; these read METL…WRGD and PDPGGPTFKDNKRESNFKTKEE. A thylakoid-targeting transit peptide spans 42–98; it reads CALRRQQPPPQAVAAWRGDGGRGGGVGSWATFLQHGLAAAALSLAISMAPAPAPAVA. Over residues 252 to 265 the composition is skewed to basic and acidic residues; the sequence is KDNKRESNFKTKEE. The helical transmembrane segment at 276–296 threads the bilayer; that stretch reads VVGGLLVIAFVVPMAQYYAYI.

This sequence belongs to the UPF0603 family.

It is found in the plastid. The protein localises to the chloroplast thylakoid membrane. The protein is UPF0603 protein OsI_019212, chloroplastic of Oryza sativa subsp. indica (Rice).